Consider the following 185-residue polypeptide: Ribosome-recycling factor (185 aa).

The tract at residues 136-161 (MDSLKTDEKKGEIGEDDRKRRETEVQ) is disordered.

The protein belongs to the RRF family.

The protein resides in the cytoplasm. In terms of biological role, responsible for the release of ribosomes from messenger RNA at the termination of protein biosynthesis. May increase the efficiency of translation by recycling ribosomes from one round of translation to another. This is Ribosome-recycling factor from Rhizorhabdus wittichii (strain DSM 6014 / CCUG 31198 / JCM 15750 / NBRC 105917 / EY 4224 / RW1) (Sphingomonas wittichii).